Reading from the N-terminus, the 530-residue chain is Chondroitin sulfate N-acetylgalactosaminyltransferase 1 (530 aa).

Residues 1–12 lie on the Cytoplasmic side of the membrane; that stretch reads MVRRGLLGWISR. A helical; Signal-anchor for type II membrane protein membrane pass occupies residues 13-33; sequence VVILLVLLCCAISVLYMLACT. Residues 34–530 lie on the Lumenal side of the membrane; the sequence is PKGDQEQLGL…QKQKASSKKT (497 aa). The stretch at 57–93 forms a coiled coil; sequence AVLQEREEQHRNYVNSLKRQIAQLKDELQARSEQFRS. Residues 88–107 are disordered; it reads SEQFRSGQDQASDATSLRSG. Positions 91–105 are enriched in polar residues; that stretch reads FRSGQDQASDATSLR. N-linked (GlcNAc...) asparagine glycosylation is found at Asn-313 and Asn-322. Residues Asp-358 and His-475 each contribute to the a divalent metal cation site.

It belongs to the chondroitin N-acetylgalactosaminyltransferase family.

The protein resides in the golgi apparatus. It localises to the golgi stack membrane. It catalyses the reaction 3-O-(beta-D-GlcA-(1-&gt;3)-beta-D-Gal-(1-&gt;3)-beta-D-Gal-(1-&gt;4)-beta-D-Xyl)-L-seryl-[protein] + UDP-N-acetyl-alpha-D-galactosamine = 3-O-(beta-D-GalNAc-(1-&gt;4)-beta-D-GlcA-(1-&gt;3)-beta-D-Gal-(1-&gt;3)-beta-D-Gal-(1-&gt;4)-beta-D-Xyl)-L-seryl-[protein] + UDP + H(+). Its function is as follows. Transfers 1,4-N-acetylgalactosamine (GalNAc) from UDP-GalNAc to the non-reducing end of glucuronic acid (GlcUA). Required for addition of the first GalNAc to the core tetrasaccharide linker and for elongation of chondroitin chains. Important role in chondroitin chain biosynthesis in cartilage formation, and subsequent endochondral ossification. Moreover, is involved in the metabolism of aggrecan. This is Chondroitin sulfate N-acetylgalactosaminyltransferase 1 from Mus musculus (Mouse).